We begin with the raw amino-acid sequence, 336 residues long: Galactose/methyl galactoside import permease protein MglC (336 aa).

The next 8 helical transmembrane spans lie at 17 to 37, 53 to 73, 107 to 127, 128 to 148, 181 to 201, 231 to 251, 257 to 277, and 306 to 326; these read AIYFVLLILLGIIIAQDPTFL, LIIALGVAGLLITQGTDLSAG, VVILAVCAIGAVIGLVNGLVI, AYLNVTPFIATMGTMIIIYGF, FKLSYITIYAAIAALLVWIMW, LVAIYMIAGMFYAFGGMLEAG, TNNLGFMYELDAIAACVVGGV, and IGVNPYWQYIIKGSIIILAVA.

This sequence belongs to the binding-protein-dependent transport system permease family. AraH/RbsC subfamily. In terms of assembly, the complex is composed of one ATP-binding protein (MglA), two transmembrane proteins (MglC) and a solute-binding protein (MglB).

Its subcellular location is the cell inner membrane. Functionally, part of the ABC transporter complex MglABC involved in galactose/methyl galactoside import. Probably responsible for the translocation of the substrate across the membrane. The chain is Galactose/methyl galactoside import permease protein MglC (mglC) from Haemophilus influenzae (strain ATCC 51907 / DSM 11121 / KW20 / Rd).